A 464-amino-acid polypeptide reads, in one-letter code: Protein ABHD18 (464 aa).

The signal sequence occupies residues 1 to 24 (MGVSKLDILYRRLLLTKLFIRGWG). The N-linked (GlcNAc...) asparagine glycan is linked to Asn-341.

It belongs to the AB hydrolase superfamily.

The protein resides in the secreted. The polypeptide is Protein ABHD18 (Mus musculus (Mouse)).